A 159-amino-acid chain; its full sequence is Fimbrial protein MyfA (159 aa).

Positions 1–29 (MNMKKFVKKPLAIAVLMLASGGMVNMVHA) are cleaved as a signal peptide.

Forms a homomer composed of subunits assembled in a large structure resistant to proteases and chaotropic agents.

Its subcellular location is the fimbrium. Its function is as follows. Major pilus subunit. Expressed only in pathogenic serotypes, it is part of myf, a probable virulence factor. In Yersinia enterocolitica, this protein is Fimbrial protein MyfA (myfA).